The sequence spans 800 residues: Nuclear cap-binding protein subunit 1 (800 aa).

Residues 1-26 (MSRRRAHDTEDESYDHRRNKRRRVSE) form a disordered region. Threonine 9 bears the Phosphothreonine mark. One can recognise an MIF4G domain in the interval 31–243 (EDRLESLILR…CLWAQIRKLR (213 aa)). The disordered stretch occupies residues 669 to 700 (LAKADSSSSDSEDDSSHKRKKPITHADKPSEE).

This sequence belongs to the NCBP1 family. Component of the nuclear cap-binding complex (CBC), a heterodimer composed of Cbp80 and Cbp20 that interacts with m7GpppG-capped RNA.

Its subcellular location is the nucleus. Its function is as follows. Component of the cap-binding complex (CBC), which binds cotranscriptionally to the 5'-cap of pre-mRNAs and is involved in various processes such as pre-mRNA splicing and RNA-mediated gene silencing (RNAi). The CBC complex is involved in miRNA-mediated RNA interference via its interaction with Ars2 and is required for primary microRNAs (miRNAs) processing. Also involved in innate immunity via the short interfering RNAs (siRNAs) processing machinery by restricting the viral RNA production. In the CBC complex, Cbp80 does not bind directly capped RNAs (m7GpppG-capped RNA) but is required to stabilize the movement of the N-terminal loop of Cbp20 and lock the CBC into a high affinity cap-binding state with the cap structure. In Drosophila erecta (Fruit fly), this protein is Nuclear cap-binding protein subunit 1 (Cbp80).